Here is a 72-residue protein sequence, read N- to C-terminus: Large ribosomal subunit protein bL31 (72 aa).

This sequence belongs to the bacterial ribosomal protein bL31 family. Type A subfamily. As to quaternary structure, part of the 50S ribosomal subunit.

In terms of biological role, binds the 23S rRNA. This chain is Large ribosomal subunit protein bL31, found in Deinococcus deserti (strain DSM 17065 / CIP 109153 / LMG 22923 / VCD115).